The sequence spans 568 residues: Vacuolar protein 8 (568 aa).

Glycine 2 carries N-myristoyl glycine lipidation. S-palmitoyl cysteine attachment occurs at residues cysteine 4, cysteine 5, and cysteine 7. ARM repeat units follow at residues 37-74 (DKDN…FAEI), 75-114 (TEKY…NLAV), 116-155 (NENK…NLAT), 157-196 (DDNK…NMTH), 198-237 (GENR…NIAV), 241-280 (NRRK…NLAS), 282-321 (TGYQ…NISI), 323-363 (PLNE…NLAA), and 407-446 (DNSK…NLCS).

Belongs to the beta-catenin family.

It localises to the vacuole membrane. In terms of biological role, functions in both vacuole inheritance and protein targeting from the cytoplasm to vacuole. The protein is Vacuolar protein 8 (VAC8) of Eremothecium gossypii (strain ATCC 10895 / CBS 109.51 / FGSC 9923 / NRRL Y-1056) (Yeast).